Here is a 187-residue protein sequence, read N- to C-terminus: Peptidyl-tRNA hydrolase (187 aa).

TRNA is bound at residue Tyr18. The Proton acceptor role is filled by His23. Residues Phe65, Asn67, and Asn113 each contribute to the tRNA site.

It belongs to the PTH family. As to quaternary structure, monomer.

The protein localises to the cytoplasm. It catalyses the reaction an N-acyl-L-alpha-aminoacyl-tRNA + H2O = an N-acyl-L-amino acid + a tRNA + H(+). Its function is as follows. Hydrolyzes ribosome-free peptidyl-tRNAs (with 1 or more amino acids incorporated), which drop off the ribosome during protein synthesis, or as a result of ribosome stalling. In terms of biological role, catalyzes the release of premature peptidyl moieties from peptidyl-tRNA molecules trapped in stalled 50S ribosomal subunits, and thus maintains levels of free tRNAs and 50S ribosomes. The chain is Peptidyl-tRNA hydrolase from Coxiella burnetii (strain RSA 331 / Henzerling II).